The sequence spans 210 residues: Cell division protein SepF (210 aa).

The interval 13–78 is disordered; that stretch reads GFGEPTGYDY…VTSTAMNPPM (66 aa). The span at 22–31 shows a compositional bias: acidic residues; the sequence is YDYDEMEGDD. The segment covering 47 to 60 has biased composition (basic and acidic residues); the sequence is RSEEPHPRPSEPEM. Residues 64 to 78 show a composition bias toward polar residues; the sequence is VNTSAVTSTAMNPPM.

It belongs to the SepF family. In terms of assembly, homodimer. Interacts with FtsZ.

The protein resides in the cytoplasm. Its function is as follows. Cell division protein that is part of the divisome complex and is recruited early to the Z-ring. Probably stimulates Z-ring formation, perhaps through the cross-linking of FtsZ protofilaments. Its function overlaps with FtsA. The protein is Cell division protein SepF of Cyanothece sp. (strain PCC 7425 / ATCC 29141).